Here is a 785-residue protein sequence, read N- to C-terminus: E3 UFM1-protein ligase 1 homolog (785 aa).

Residues M396–D416 are compositionally biased toward basic and acidic residues. Residues M396 to K473 form a disordered region. The span at K439–R449 shows a compositional bias: basic residues.

It belongs to the UFL1 family.

Functionally, E3 UFM1-protein ligase that mediates ufmylation of target proteins. The polypeptide is E3 UFM1-protein ligase 1 homolog (Culex quinquefasciatus (Southern house mosquito)).